Reading from the N-terminus, the 102-residue chain is MFLTALLCRGRIPGRQWIGKHRRPRTVSALAKQNMIRRLEIEAENHYWLSRPFLTAEQERGHAAARRAAAFEALKAAQAAKFPAHRRLEDQLDHLNVTRKWS.

It belongs to the mitochondrion-specific ribosomal protein mL63 family.

The protein resides in the mitochondrion. This chain is Large ribosomal subunit protein mL63 (MRPL57), found in Bos taurus (Bovine).